A 206-amino-acid polypeptide reads, in one-letter code: 2-phospho-L-lactate guanylyltransferase (206 aa).

This sequence belongs to the CofC family. In terms of assembly, homodimer.

It carries out the reaction (2S)-2-phospholactate + GTP + H(+) = (2S)-lactyl-2-diphospho-5'-guanosine + diphosphate. It functions in the pathway cofactor biosynthesis; coenzyme F420 biosynthesis. Functionally, guanylyltransferase that catalyzes the activation of (2S)-2-phospholactate (2-PL) as (2S)-lactyl-2-diphospho-5'-guanosine, via the condensation of 2-PL with GTP. It is involved in the biosynthesis of coenzyme F420, a hydride carrier cofactor. The protein is 2-phospho-L-lactate guanylyltransferase of Archaeoglobus profundus (strain DSM 5631 / JCM 9629 / NBRC 100127 / Av18).